The primary structure comprises 161 residues: RNA pyrophosphohydrolase (161 aa).

The Nudix hydrolase domain occupies 12–154; sequence PYRPGVGMMI…KRKLYQAVVK (143 aa). A Nudix box motif is present at residues 46 to 67; sequence GGIVPGETPSIAAMREMLEEIG.

Belongs to the Nudix hydrolase family. RppH subfamily. The cofactor is a divalent metal cation.

Accelerates the degradation of transcripts by removing pyrophosphate from the 5'-end of triphosphorylated RNA, leading to a more labile monophosphorylated state that can stimulate subsequent ribonuclease cleavage. The protein is RNA pyrophosphohydrolase of Rickettsia conorii (strain ATCC VR-613 / Malish 7).